Here is a 400-residue protein sequence, read N- to C-terminus: Tyrosine-specific transport system 1 (400 aa).

12 helical membrane-spanning segments follow: residues 5–25 (VGST…AMPL), 34–54 (FTLV…LLFV), 80–100 (IIAT…YISG), 117–137 (VSVL…THSV), 143–163 (VLFF…LPEI), 176–196 (ALII…GSIP), 211–231 (FSIL…QLST), 250–270 (LNGL…ASAV), 273–293 (FSTL…LECI), 313–333 (LTFI…ILAL), 335–355 (YAGQ…VWKA), and 370–390 (NLTL…PFAI).

This sequence belongs to the amino acid/polyamine transporter 2 family. Mtr/TnaB/TyrP permease subfamily.

The protein resides in the cell inner membrane. It catalyses the reaction L-tyrosine(in) + H(+)(in) = L-tyrosine(out) + H(+)(out). Its function is as follows. Transports tyrosine across the cytoplasmic membrane. The transport system is energized by the proton motive force. The sequence is that of Tyrosine-specific transport system 1 (tyrP-A) from Haemophilus influenzae (strain ATCC 51907 / DSM 11121 / KW20 / Rd).